Reading from the N-terminus, the 260-residue chain is DNA import protein CedA (260 aa).

The next 6 membrane-spanning stretches (helical) occupy residues 13–33 (LLASLTYFIGAAIYALPVPVY), 47–67 (IYVVVWNSIYLGVLLFLGELL), 110–130 (ALIQVVPFGALLTVITSALTF), 140–160 (IVYQYVAVFIATGVLFLSIPF), 169–189 (AFIGSGIVFYVGLPYLPQFLA), and 220–240 (IITSLVIGPVIYIFILVGFSM).

Forms a complex composed of CedA, CedA1 and CedA2.

It is found in the cell membrane. Part of the Ced system, which is involved in DNA import. The chain is DNA import protein CedA from Sulfolobus acidocaldarius (strain ATCC 33909 / DSM 639 / JCM 8929 / NBRC 15157 / NCIMB 11770).